Here is a 175-residue protein sequence, read N- to C-terminus: 6,7-dimethyl-8-ribityllumazine synthase (175 aa).

Residues Phe-24, Ala-58–Glu-60, and Ala-82–Ile-84 each bind 5-amino-6-(D-ribitylamino)uracil. Residue Glu-87–Thr-88 coordinates (2S)-2-hydroxy-3-oxobutyl phosphate. His-90 serves as the catalytic Proton donor. Residue Asn-115 participates in 5-amino-6-(D-ribitylamino)uracil binding. A (2S)-2-hydroxy-3-oxobutyl phosphate-binding site is contributed by Arg-129. Residues Ala-150–Arg-175 are disordered. The span at Glu-152 to Arg-175 shows a compositional bias: acidic residues.

It belongs to the DMRL synthase family.

It catalyses the reaction (2S)-2-hydroxy-3-oxobutyl phosphate + 5-amino-6-(D-ribitylamino)uracil = 6,7-dimethyl-8-(1-D-ribityl)lumazine + phosphate + 2 H2O + H(+). It participates in cofactor biosynthesis; riboflavin biosynthesis; riboflavin from 2-hydroxy-3-oxobutyl phosphate and 5-amino-6-(D-ribitylamino)uracil: step 1/2. Its function is as follows. Catalyzes the formation of 6,7-dimethyl-8-ribityllumazine by condensation of 5-amino-6-(D-ribitylamino)uracil with 3,4-dihydroxy-2-butanone 4-phosphate. This is the penultimate step in the biosynthesis of riboflavin. This is 6,7-dimethyl-8-ribityllumazine synthase from Bordetella bronchiseptica (strain ATCC BAA-588 / NCTC 13252 / RB50) (Alcaligenes bronchisepticus).